The chain runs to 176 residues: MFFHIVLERNMQLHPRYFGRNLRDNLVSKLMKDVEGTCSGRHGFVVAVTGIENIGKGLIRDGTGFVTFPVKYQCVVFRPFKGEILEAVVTMVNKMGFFAEAGPVQIFVSNHLIPDDMEFQSGDMPNYTTSDGSVKIQKDSEVRLKIIGTRVDATEIFCIGTIKDDFLGVINDPATV.

Belongs to the eukaryotic RPB7/RPC8 RNA polymerase subunit family. As to quaternary structure, component of the RNA polymerase II (Pol II) complex consisting of 12 subunits. RPB4 and RPB7 form a subcomplex that protrudes from the 10-subunit Pol II core complex.

It is found in the nucleus. Its function is as follows. DNA-dependent RNA polymerase catalyzes the transcription of DNA into RNA using the four ribonucleoside triphosphates as substrates. Component of RNA polymerase II which synthesizes mRNA precursors and many functional non-coding RNAs. Pol II is the central component of the basal RNA polymerase II transcription machinery. It is composed of mobile elements that move relative to each other. RPB7 is part of a subcomplex with RPB4 that binds to a pocket formed by RPB1, RPB2 and RPB6 at the base of the clamp element. The RPB4-RPB7 subcomplex seems to lock the clamp via RPB7 in the closed conformation thus preventing double-stranded DNA to enter the active site cleft. The RPB4-RPB7 subcomplex binds single-stranded DNA and RNA. The sequence is that of DNA-directed RNA polymerase II subunit RPB7 from Glycine max (Soybean).